The following is a 190-amino-acid chain: Elongation factor P 2 (190 aa).

It belongs to the elongation factor P family.

It is found in the cytoplasm. It participates in protein biosynthesis; polypeptide chain elongation. Its function is as follows. Involved in peptide bond synthesis. Stimulates efficient translation and peptide-bond synthesis on native or reconstituted 70S ribosomes in vitro. Probably functions indirectly by altering the affinity of the ribosome for aminoacyl-tRNA, thus increasing their reactivity as acceptors for peptidyl transferase. The protein is Elongation factor P 2 (efp2) of Chlamydia caviae (strain ATCC VR-813 / DSM 19441 / 03DC25 / GPIC) (Chlamydophila caviae).